A 284-amino-acid chain; its full sequence is Tropomyosin (284 aa).

At methionine 1 the chain carries N-acetylmethionine. 2 disordered regions span residues 1–49 and 103–126; these read MDAI…NQKK and EERL…SERM. Residues 1 to 284 are a coiled coil; the sequence is MDAIKKKMQA…DQAFSELSGF (284 aa). The span at 12 to 45 shows a compositional bias: basic and acidic residues; that stretch reads KLEKDNAMDKADTLEQQNKEANLRAEKTEEEIRA.

Belongs to the tropomyosin family. In terms of assembly, homodimer. In terms of tissue distribution, expressed in leg muscle and chest protection muscle (at protein level).

In terms of biological role, tropomyosin, in association with the troponin complex, plays a central role in the calcium dependent regulation of muscle contraction. The protein is Tropomyosin of Chionoecetes opilio (Atlantic snow crab).